A 472-amino-acid polypeptide reads, in one-letter code: ESX-3 secretion system protein EccD3 (472 aa).

Helical transmembrane passes span tryptophan 121–alanine 141, leucine 155–isoleucine 175, glycine 183–proline 203, valine 211–alanine 231, valine 236–alanine 256, leucine 258–valine 278, glutamine 327–valine 347, proline 349–leucine 369, alanine 381–threonine 401, valine 405–alanine 425, and glycine 450–leucine 470.

Belongs to the EccD/Snm4 family. Part of the ESX-3 / type VII secretion system (T7SS), which is composed of cytosolic and membrane components. The ESX-3 membrane complex is composed of EccB3, EccC3, EccD3 and EccE3.

The protein resides in the cell inner membrane. Functionally, part of the ESX-3 specialized secretion system, which is important for iron and zinc uptake or homeostasis. The polypeptide is ESX-3 secretion system protein EccD3 (Mycobacterium tuberculosis (strain CDC 1551 / Oshkosh)).